Consider the following 492-residue polypeptide: Solute carrier family 2, facilitated glucose transporter member 1 (492 aa).

The residue at position 1 (methionine 1) is an N-acetylmethionine. Residues 1–11 are Cytoplasmic-facing; it reads MEPSSKKLTGR. Residues 12 to 33 traverse the membrane as a helical segment; that stretch reads LMLAVGGAVLGSLQFGYNTGVI. The Extracellular segment spans residues 34 to 66; that stretch reads NAPQKVIEEFYNQTWLHRYGESISPATLTTLWS. N-linked (GlcNAc...) asparagine glycosylation is present at asparagine 45. Residues 67-87 traverse the membrane as a helical segment; it reads LSVAIFSVGGMIGSFSVGLFV. Over 88 to 90 the chain is Cytoplasmic; that stretch reads NRF. The helical transmembrane segment at 91–112 threads the bilayer; that stretch reads GRRNSMLMMNLLAFISAVLMGF. At 113-120 the chain is on the extracellular side; the sequence is SKLGKSFE. The chain crosses the membrane as a helical span at residues 121–144; that stretch reads MLILGRFIIGVYCGLTTGFVPMYV. At 145–155 the chain is on the cytoplasmic side; that stretch reads GEVSPTALRGA. A helical membrane pass occupies residues 156 to 176; that stretch reads LGTLHQLGIVVGILIAQVFGL. D-glucose is bound at residue glutamine 161. The Extracellular portion of the chain corresponds to 177-185; that stretch reads DSIMGNEEL. A helical transmembrane segment spans residues 186 to 206; that stretch reads WPLLLSVIFIPALLQCVLLPF. Residues 207 to 271 are Cytoplasmic-facing; the sequence is CPESPRFLLI…LFRSAAYRQP (65 aa). Serine 226 is subject to Phosphoserine. A helical transmembrane segment spans residues 272-293; it reads ILIAVVLQLSQQLSGINAVFYY. D-glucose-binding positions include 282-283 and asparagine 288; that span reads QQ. Residues 294–306 are Extracellular-facing; sequence STSIFEKAGVQQP. A helical membrane pass occupies residues 307–328; that stretch reads VYATIGSGIVNTAFTVVSLFVV. Asparagine 317 lines the D-glucose pocket. The Cytoplasmic portion of the chain corresponds to 329–334; the sequence is ERAGRR. A helical transmembrane segment spans residues 335 to 355; it reads TLHLIGLAGMAGCAVLMTIAL. Residues 356–365 lie on the Extracellular side of the membrane; the sequence is ALLEQLPWMS. The chain crosses the membrane as a helical span at residues 366–388; that stretch reads YLSIVAIFGFVAFFEVGPGPIPW. D-glucose-binding residues include glutamate 380 and tryptophan 388. The Cytoplasmic portion of the chain corresponds to 389-401; it reads FIVAELFSQGPRP. A helical membrane pass occupies residues 402-422; the sequence is AAIAVAGFSNWTSNFIVGMCF. Over 423-429 the chain is Extracellular; the sequence is QYVEQLC. A helical membrane pass occupies residues 430–450; the sequence is GPYVFIIFTVLLVLFFIFTYF. Phosphoserine is present on serine 465. Positions 468–492 are disordered; sequence RQGGASQSDKTPEELFHPLGADSQV. Position 478 is a phosphothreonine (threonine 478). At serine 490 the chain carries Phosphoserine.

It belongs to the major facilitator superfamily. Sugar transporter (TC 2.A.1.1) family. Glucose transporter subfamily. In terms of assembly, found in a complex with ADD2, DMTN and SLC2A1. Interacts (via C-terminus cytoplasmic region) with DMTN. Interacts with SNX27; the interaction is required when endocytosed to prevent degradation in lysosomes and promote recycling to the plasma membrane. Interacts with GIPC (via PDZ domain). Interacts with STOM. Interacts with SGTA (via Gln-rich region). Interacts with BSG. Interacts with SMIM43; the interaction may promote SLC2A1-mediated glucose transport to meet the energy needs of mesendoderm differentiation. Post-translationally, phosphorylation at Ser-226 by PKC promotes glucose uptake by increasing cell membrane localization.

It localises to the cell membrane. Its subcellular location is the photoreceptor inner segment. It catalyses the reaction D-glucose(out) = D-glucose(in). Its activity is regulated as follows. The uptake of glucose is inhibited by cytochalasin B. Glucose uptake is increased in response to phorbol ester 12-O-tetradecanoylphorbol-13-acetate (TPA) treatment: TPA-induced glucose uptake requires phosphorylation at Ser-226. In terms of biological role, facilitative glucose transporter, which is responsible for constitutive or basal glucose uptake. Has a very broad substrate specificity; can transport a wide range of aldoses including both pentoses and hexoses. Most important energy carrier of the brain: present at the blood-brain barrier and assures the energy-independent, facilitative transport of glucose into the brain. In association with BSG and NXNL1, promotes retinal cone survival by increasing glucose uptake into photoreceptors. Required for mesendoderm differentiation. The sequence is that of Solute carrier family 2, facilitated glucose transporter member 1 from Sus scrofa (Pig).